We begin with the raw amino-acid sequence, 314 residues long: DDRGK domain-containing protein 1 (314 aa).

A helical membrane pass occupies residues 1-28; the sequence is MVAPVWYLVAAALLVGFILFLTRSRGRA. The mediates interaction with CDK5RAP3 stretch occupies residues 1 to 114; the sequence is MVAPVWYLVA…VEKPAETHLS (114 aa). At 29–314 the chain is on the cytoplasmic side; it reads ASAGQEPLHN…GRESPAQAPA (286 aa). Disordered regions lie at residues 31–75 and 100–186; these read AGQE…SRLQ and QEEE…QREH. A phosphoserine mark is found at Ser-72 and Ser-114. Residues 118–216 form a mediates interaction with TRIP4 region; it reads GAKKLRKLEE…MTEEQSQSFL (99 aa). Basic and acidic residues predominate over residues 124-186; it reads KLEEKQARKA…AREEQAQREH (63 aa). The UFM1-interacting motif (UFIM) signature appears at 195-209; that stretch reads AFVVEEEGVGETMTE. The mediates interaction with UFL1 stretch occupies residues 216–314; sequence LTEFINYIKQ…GRESPAQAPA (99 aa). Positions 229–273 constitute a PCI domain; it reads VLLEDLASQVGLRTQDTINRIQDLLAEGTITGVIDDRGKFIYITP. Residue Lys-267 forms a Glycyl lysine isopeptide (Lys-Gly) (interchain with G-Cter in UFM1) linkage.

This sequence belongs to the DDRGK1 family. As to quaternary structure, component of the UFM1 ribosome E3 ligase (UREL) complex, composed of UFL1, DDRGK1 and CDK5RAP3. Interacts with (unphosphorylated) ERN1/IRE1-alpha; interaction is dependent on UFM1 and takes place in response to endoplasmic reticulum stress, regulating ERN1/IRE1-alpha stability. Interacts with NFKBIA. Interacts with SOX9. In terms of processing, ubiquitinated. Ubiquitination probably triggers proteasomal degradation and is negatively regulated by UFL1, the enzyme involved in the ufmylation of DDRGK1. Ufmylated; conjugated to ubiquitin-like protein UFM1, probably at Lys-267 by UFL1. The relevance of ufmylation is however unclear: as DDRGK1 acts as a substrate adapters for ufmylation, it is uncertain whether ufmylation is a collateral effect of ufmylation process or is required to regulate its activity. In terms of tissue distribution, widely expressed (at protein level). In the brain, highest levels in medulla oblongata, followed by cerebral cortex, cerebellum and frontal lobe.

It is found in the endoplasmic reticulum membrane. In terms of biological role, component of the UFM1 ribosome E3 ligase (UREL) complex, a multiprotein complex that catalyzes ufmylation of endoplasmic reticulum-docked proteins. The UREL complex plays a key role in ribosome recycling by mediating mono-ufmylation of the RPL26/uL24 subunit of the 60S ribosome following ribosome dissociation: ufmylation weakens the junction between post-termination 60S subunits and SEC61 translocons, promoting release and recycling of the large ribosomal subunit from the endoplasmic reticulum membrane. Ufmylation of RPL26/uL24 and subsequent 60S ribosome recycling either take place after normal termination of translation or after ribosome stalling during cotranslational translocation at the endoplasmic reticulum. Within the UREL complex, DDRGK1 tethers the complex to the endoplasmic reticulum membrane to restrict its activity to endoplasmic reticulum-docked ribosomes and acts as an ufmylation 'reader': following RPL26/uL24 ufmylation, DDRGK1 specifically binds to ufmylated RPL26/uL24 via its UFIM motif, resulting in stable association between the 60S ribosome and the UREL complex, followed by dissociation of the 60S ribosome subunit from the endoplasmic reticulum membrane. The UREL complex is also involved in reticulophagy in response to endoplasmic reticulum stress by promoting ufmylation of proteins such as CYB5R3 and RPN1, thereby promoting lysosomal degradation of ufmylated proteins. Ufmylation-dependent reticulophagy inhibits the unfolded protein response (UPR) by regulating ERN1/IRE1-alpha stability. Acts as a regulator of immunity by promoting differentiation of B-cells into plasma cells: acts by promoting expansion of the endoplasmic reticulum and regulating the unfolded protein response (UPR). May also be required for TRIP4 ufmylation. May play a role in NF-kappa-B-mediated transcription through regulation of the phosphorylation and the degradation of NFKBIA, the inhibitor of NF-kappa-B. Plays a role in cartilage development through SOX9, inhibiting the ubiquitin-mediated proteasomal degradation of this transcriptional regulator. Required for stabilization and ufmylation of ATG9A. The protein is DDRGK domain-containing protein 1 of Homo sapiens (Human).